A 103-amino-acid chain; its full sequence is Large ribosomal subunit protein bL21 (103 aa).

It belongs to the bacterial ribosomal protein bL21 family. Part of the 50S ribosomal subunit. Contacts protein L20.

In terms of biological role, this protein binds to 23S rRNA in the presence of protein L20. The protein is Large ribosomal subunit protein bL21 of Nocardia farcinica (strain IFM 10152).